Reading from the N-terminus, the 247-residue chain is DNA-directed RNA polymerase subunit Rpo3 (247 aa).

Belongs to the archaeal Rpo3/eukaryotic RPB3 RNA polymerase subunit family. In terms of assembly, part of the RNA polymerase complex.

The protein resides in the cytoplasm. The catalysed reaction is RNA(n) + a ribonucleoside 5'-triphosphate = RNA(n+1) + diphosphate. Its function is as follows. DNA-dependent RNA polymerase (RNAP) catalyzes the transcription of DNA into RNA using the four ribonucleoside triphosphates as substrates. This chain is DNA-directed RNA polymerase subunit Rpo3, found in Natronomonas pharaonis (strain ATCC 35678 / DSM 2160 / CIP 103997 / JCM 8858 / NBRC 14720 / NCIMB 2260 / Gabara) (Halobacterium pharaonis).